We begin with the raw amino-acid sequence, 464 residues long: Siroheme synthase (464 aa).

Positions 1–203 are precorrin-2 dehydrogenase /sirohydrochlorin ferrochelatase; it reads MEFLPLFHNL…GQGAEAERLL (203 aa). NAD(+) contacts are provided by residues 22–23 and 43–44; these read EI and PE. Serine 128 is subject to Phosphoserine. A uroporphyrinogen-III C-methyltransferase region spans residues 216 to 464; it reads GEVYLVGAGP…AWFEGAQATV (249 aa). Proline 225 lines the S-adenosyl-L-methionine pocket. Residue aspartate 248 is the Proton acceptor of the active site. Residue lysine 270 is the Proton donor of the active site. S-adenosyl-L-methionine is bound by residues 301 to 303, isoleucine 306, 331 to 332, methionine 383, and glycine 412; these read GGD and TA.

This sequence in the N-terminal section; belongs to the precorrin-2 dehydrogenase / sirohydrochlorin ferrochelatase family. The protein in the C-terminal section; belongs to the precorrin methyltransferase family.

The enzyme catalyses uroporphyrinogen III + 2 S-adenosyl-L-methionine = precorrin-2 + 2 S-adenosyl-L-homocysteine + H(+). It carries out the reaction precorrin-2 + NAD(+) = sirohydrochlorin + NADH + 2 H(+). The catalysed reaction is siroheme + 2 H(+) = sirohydrochlorin + Fe(2+). It participates in cofactor biosynthesis; adenosylcobalamin biosynthesis; precorrin-2 from uroporphyrinogen III: step 1/1. It functions in the pathway cofactor biosynthesis; adenosylcobalamin biosynthesis; sirohydrochlorin from precorrin-2: step 1/1. The protein operates within porphyrin-containing compound metabolism; siroheme biosynthesis; precorrin-2 from uroporphyrinogen III: step 1/1. Its pathway is porphyrin-containing compound metabolism; siroheme biosynthesis; siroheme from sirohydrochlorin: step 1/1. It participates in porphyrin-containing compound metabolism; siroheme biosynthesis; sirohydrochlorin from precorrin-2: step 1/1. Functionally, multifunctional enzyme that catalyzes the SAM-dependent methylations of uroporphyrinogen III at position C-2 and C-7 to form precorrin-2 via precorrin-1. Then it catalyzes the NAD-dependent ring dehydrogenation of precorrin-2 to yield sirohydrochlorin. Finally, it catalyzes the ferrochelation of sirohydrochlorin to yield siroheme. The protein is Siroheme synthase of Pseudomonas savastanoi pv. phaseolicola (strain 1448A / Race 6) (Pseudomonas syringae pv. phaseolicola (strain 1448A / Race 6)).